The following is a 148-amino-acid chain: uncharacterized protein (148 aa).

The ABC transmembrane type-1 domain occupies 25 to 148; that stretch reads LSIGLIFSLI…YSITNIFIYN (124 aa). 3 helical membrane passes run 26–46, 60–80, and 127–147; these read SIGL…PLII, IVII…STYI, and ITRV…IFIY.

Its subcellular location is the cell membrane. This is an uncharacterized protein from Staphylococcus epidermidis.